The sequence spans 500 residues: Glycerol kinase (500 aa).

Thr11 is an ADP binding site. Residues Thr11, Thr12, and Ser13 each contribute to the ATP site. Residue Thr11 participates in sn-glycerol 3-phosphate binding. An ADP-binding site is contributed by Arg15. Positions 81, 82, 133, and 242 each coordinate sn-glycerol 3-phosphate. Arg81, Glu82, Tyr133, Asp242, and Gln243 together coordinate glycerol. The ADP site is built by Thr264 and Gly307. ATP contacts are provided by Thr264, Gly307, Gln311, and Gly411. Residue Gly411 coordinates ADP.

Belongs to the FGGY kinase family.

The catalysed reaction is glycerol + ATP = sn-glycerol 3-phosphate + ADP + H(+). It participates in polyol metabolism; glycerol degradation via glycerol kinase pathway; sn-glycerol 3-phosphate from glycerol: step 1/1. Inhibited by fructose 1,6-bisphosphate (FBP). Functionally, key enzyme in the regulation of glycerol uptake and metabolism. Catalyzes the phosphorylation of glycerol to yield sn-glycerol 3-phosphate. The protein is Glycerol kinase of Rhodopseudomonas palustris (strain BisA53).